The sequence spans 455 residues: MANRFAVILAAGQGTRMKSKLHKMLHPVAGRPMVQHVVDQLQQVNLNKIVTIVGFGAEKVKAQLGSSSEFAFQKEQLGTGHAVLQAEDLLKDEKGVTVVACGDTPLIRAETFEELIQYHKKTGAKASILTTKVENPTGYGRVVRNDQDEVERIVEHKDANEGERLIQEINTGTYCFDNQALFAALKEVSNDNAQGEYYLPDVIKILRHQGDTVSAFMTPDFDETIGINDRIALAEAEKIMKKRINEQHMRNGVSIIDPEQTYIEPDVQIESDVILHPGTVLKGETIIRTGAEIGPHSELKDCEVGEDTVIRHSVATSSKVGNRVNIGPYAHIRPESRVGNDTKVGNFVEIKKTNLGDHSKVSHLSYIGDADVGERVNVGCGTITVNYDGTNKYLTTIEDDAFIGCNSNLIAPVTVGKGSYVAAGSTITKNVPENALSIARARQTNKEEYASKFKK.

The interval 1-230 is pyrophosphorylase; that stretch reads MANRFAVILA…FDETIGINDR (230 aa). UDP-N-acetyl-alpha-D-glucosamine is bound by residues 9-12, Lys23, Gln73, and 78-79; these read LAAG and GT. Residue Asp103 coordinates Mg(2+). Residues Gly140, Glu155, Asn170, and Asn228 each coordinate UDP-N-acetyl-alpha-D-glucosamine. Asn228 provides a ligand contact to Mg(2+). Residues 231-251 form a linker region; the sequence is IALAEAEKIMKKRINEQHMRN. Residues 252 to 455 are N-acetyltransferase; the sequence is GVSIIDPEQT…KEEYASKFKK (204 aa). Positions 333 and 351 each coordinate UDP-N-acetyl-alpha-D-glucosamine. Residue His363 is the Proton acceptor of the active site. UDP-N-acetyl-alpha-D-glucosamine is bound by residues Tyr366 and Asn377. Residues 386-387, Ala423, and Arg440 contribute to the acetyl-CoA site; that span reads NY.

This sequence in the N-terminal section; belongs to the N-acetylglucosamine-1-phosphate uridyltransferase family. In the C-terminal section; belongs to the transferase hexapeptide repeat family. As to quaternary structure, homotrimer. The cofactor is Mg(2+).

The protein localises to the cytoplasm. It catalyses the reaction alpha-D-glucosamine 1-phosphate + acetyl-CoA = N-acetyl-alpha-D-glucosamine 1-phosphate + CoA + H(+). The catalysed reaction is N-acetyl-alpha-D-glucosamine 1-phosphate + UTP + H(+) = UDP-N-acetyl-alpha-D-glucosamine + diphosphate. It participates in nucleotide-sugar biosynthesis; UDP-N-acetyl-alpha-D-glucosamine biosynthesis; N-acetyl-alpha-D-glucosamine 1-phosphate from alpha-D-glucosamine 6-phosphate (route II): step 2/2. It functions in the pathway nucleotide-sugar biosynthesis; UDP-N-acetyl-alpha-D-glucosamine biosynthesis; UDP-N-acetyl-alpha-D-glucosamine from N-acetyl-alpha-D-glucosamine 1-phosphate: step 1/1. Its pathway is bacterial outer membrane biogenesis; LPS lipid A biosynthesis. Catalyzes the last two sequential reactions in the de novo biosynthetic pathway for UDP-N-acetylglucosamine (UDP-GlcNAc). The C-terminal domain catalyzes the transfer of acetyl group from acetyl coenzyme A to glucosamine-1-phosphate (GlcN-1-P) to produce N-acetylglucosamine-1-phosphate (GlcNAc-1-P), which is converted into UDP-GlcNAc by the transfer of uridine 5-monophosphate (from uridine 5-triphosphate), a reaction catalyzed by the N-terminal domain. The chain is Bifunctional protein GlmU from Oceanobacillus iheyensis (strain DSM 14371 / CIP 107618 / JCM 11309 / KCTC 3954 / HTE831).